A 304-amino-acid polypeptide reads, in one-letter code: MASQPAGGSPPKPWEKEGNTSGPNPFRPPSNTSTAGSVEASGTANPGEVVPPPVNRPNTAANMNSLSRPVPARPWEQQNYGSTMGGGYGSNLGMTSGYGSGTYGSALGGYGSSYGGGMYGGSSMYRGGYGGGGLYGSSGMYGGGAMGGYGGTMGGYGMGMGTGMGMGMGMGMGGPYGSQDPNDPFNQPPSPPGFWISFLRVMQGAVNFFGRVAMLIDQNTQAFHMFMSALLQLFDRGGMLYGELARFVLRMLGVRTRPRKMQQPPQGPNGLPLPHQPHGNQNYLEGPKTAAPGGGGGWDNVWGN.

2 disordered regions span residues 1–78 (MASQ…WEQQ) and 258–304 (PRKM…VWGN). 2 stretches are compositionally biased toward polar residues: residues 19 to 44 (NTSG…SGTA) and 56 to 67 (RPNTAANMNSLS). Low complexity predominate over residues 262-279 (QQPPQGPNGLPLPHQPHG).

The protein belongs to the peroxin-13 family. In terms of assembly, interacts with PEX14; forming the PEX13-PEX14 docking complex. Interacts (via N-terminus) with PEX7, but not with PEX5. Interacts with APEM9 (via N-terminus). As to expression, highly expressed in pollen. Detected in shoots, roots, stems, leaves, inflorescences and emasculated postils. Strongly expressed in both male and female gametophytes during fertilization.

The protein localises to the peroxisome membrane. Its function is as follows. Component of the PEX13-PEX14 docking complex, a translocon channel that specifically mediates the import of peroxisomal cargo proteins bound to PEX5 receptor. The PEX13-PEX14 docking complex forms a large import pore which can be opened to a diameter of about 9 nm. Mechanistically, PEX5 receptor along with cargo proteins associates with the PEX14 subunit of the PEX13-PEX14 docking complex in the cytosol, leading to the insertion of the receptor into the organelle membrane with the concomitant translocation of the cargo into the peroxisome matrix. Essential for pollen-tube discharge that take place only in the presence of functional peroxisomes in either the male or the female gametophyte. The protein is Peroxisomal membrane protein 13 of Arabidopsis thaliana (Mouse-ear cress).